We begin with the raw amino-acid sequence, 467 residues long: Solute carrier family 52, riboflavin transporter, member 3 (467 aa).

Topologically, residues 1–2 are cytoplasmic; sequence MA. A helical membrane pass occupies residues 3–23; sequence FLIHLLVCTFGMGSWVAINGL. Residues 24–43 are Extracellular-facing; the sequence is WVELPLLVTELPEGWYLPSY. The helical transmembrane segment at 44 to 64 threads the bilayer; it reads LTVIIQLANVGPLLVTLLHHF. The Cytoplasmic segment spans residues 65 to 71; it reads RPGCLSE. Residues 72 to 92 form a helical membrane-spanning segment; that stretch reads VAVVFTVLGVGTIACTLFAFL. Residues 93-105 are Extracellular-facing; sequence WNVTSWVLGSRHS. N-linked (GlcNAc...) asparagine glycosylation occurs at Asn-94. A helical transmembrane segment spans residues 106–126; the sequence is IAFLVLTFFLALVDCTSSVTF. Over 127–137 the chain is Cytoplasmic; sequence LPFMSRLPTYY. The helical transmembrane segment at 138-158 threads the bilayer; sequence LTTFFVGEGLSGLLPALVALA. Residues 159-220 are Extracellular-facing; sequence QGSGLTTCVN…SRYLPANFSP (62 aa). Residue Asn-168 is glycosylated (N-linked (GlcNAc...) asparagine). The helical transmembrane segment at 221-241 threads the bilayer; it reads LVFFLLLSFMMACCFISFFFL. Over 242–294 the chain is Cytoplasmic; that stretch reads QRQPKRWEASIEDLLTSQVTLNSIRPQEGKDLGPPEESGKAQDPPEEKTAPQH. Ser-251 carries the phosphoserine modification. Positions 266 to 288 are disordered; that stretch reads RPQEGKDLGPPEESGKAQDPPEE. The segment covering 268-288 has biased composition (basic and acidic residues); sequence QEGKDLGPPEESGKAQDPPEE. A helical membrane pass occupies residues 295 to 315; it reads LAHLTFIYVLVAFVNALTNGV. The Extracellular portion of the chain corresponds to 316–333; that stretch reads LPSVQTYSCLSYGPVAYH. Residues 334-354 form a helical membrane-spanning segment; that stretch reads LSATLSSMASPLTCFLSIFLP. At 355-359 the chain is on the cytoplasmic side; sequence NRSLP. The chain crosses the membrane as a helical span at residues 360-380; that stretch reads FLGVLAVLGTSFGAYNMAMAV. Residues 381 to 394 are Extracellular-facing; it reads MSPCPFMQGHWGGE. The chain crosses the membrane as a helical span at residues 395–415; that stretch reads VLIVVSWVLFTGCLSYVKVML. The Cytoplasmic portion of the chain corresponds to 416 to 425; sequence GVILRDHSRS. The chain crosses the membrane as a helical span at residues 426–446; the sequence is ALLWCGAAVQLGSLLGAVVMF. At 447 to 467 the chain is on the extracellular side; the sequence is PLVNVLRLFSSADFCSLQCSA.

Belongs to the riboflavin transporter family.

It is found in the cell membrane. It catalyses the reaction riboflavin(in) = riboflavin(out). Plasma membrane transporter mediating the uptake by cells of the water soluble vitamin B2/riboflavin that plays a key role in biochemical oxidation-reduction reactions of the carbohydrate, lipid, and amino acid metabolism. The polypeptide is Solute carrier family 52, riboflavin transporter, member 3 (SLC52A3) (Bos taurus (Bovine)).